The primary structure comprises 443 residues: ATP-dependent protease ATPase subunit HslU (443 aa).

ATP is bound by residues I18, 60–65 (GVGKTE), D256, E321, and R393.

This sequence belongs to the ClpX chaperone family. HslU subfamily. As to quaternary structure, a double ring-shaped homohexamer of HslV is capped on each side by a ring-shaped HslU homohexamer. The assembly of the HslU/HslV complex is dependent on binding of ATP.

Its subcellular location is the cytoplasm. In terms of biological role, ATPase subunit of a proteasome-like degradation complex; this subunit has chaperone activity. The binding of ATP and its subsequent hydrolysis by HslU are essential for unfolding of protein substrates subsequently hydrolyzed by HslV. HslU recognizes the N-terminal part of its protein substrates and unfolds these before they are guided to HslV for hydrolysis. In Pasteurella multocida (strain Pm70), this protein is ATP-dependent protease ATPase subunit HslU.